We begin with the raw amino-acid sequence, 540 residues long: CUB domain-containing protein 2 (540 aa).

Positions 1–24 are cleaved as a signal peptide; the sequence is MLAELGACLLLAMVLLDSDPGTQA. The Extracellular segment spans residues 25–516; that stretch reads MEGVKCGGVL…GTMVTQDTSD (492 aa). Cystine bridges form between C30/C56, C83/C106, C145/C171, C198/C218, C257/C283, and C314/C336. 3 CUB domains span residues 30–143, 145–255, and 257–373; these read CGGV…YQKD, CGGV…YFSG, and CQEV…YIGV. A glycan (N-linked (GlcNAc...) asparagine) is linked at N40. N267 is a glycosylation site (N-linked (GlcNAc...) asparagine). N-linked (GlcNAc...) asparagine glycosylation is found at N377, N435, and N436. A helical membrane pass occupies residues 517–537; sequence IVFLGLCILAGVLMIIAIVVL. The Cytoplasmic portion of the chain corresponds to 538–540; the sequence is MLL.

It localises to the membrane. The sequence is that of CUB domain-containing protein 2 (Cdcp2) from Mus musculus (Mouse).